Reading from the N-terminus, the 179-residue chain is MIIPKRYAEALFQLAKEREKINEITQSFNQLIERLRSNEEVFKLLSYPVVDIAEKKQVADELTADLEQEIRDYLKVLIDNKRTDELAEIHDTFLDLVRTEENRTLCEVKTPIPLDEDELKKIQDLLAQMSEGEVEIETTTDESIIGGIVVRIGDRVFDYSLKGQLNSLREQLKKTTITS.

It belongs to the ATPase delta chain family. As to quaternary structure, F-type ATPases have 2 components, F(1) - the catalytic core - and F(0) - the membrane proton channel. F(1) has five subunits: alpha(3), beta(3), gamma(1), delta(1), epsilon(1). F(0) has three main subunits: a(1), b(2) and c(10-14). The alpha and beta chains form an alternating ring which encloses part of the gamma chain. F(1) is attached to F(0) by a central stalk formed by the gamma and epsilon chains, while a peripheral stalk is formed by the delta and b chains.

The protein localises to the cell membrane. Functionally, f(1)F(0) ATP synthase produces ATP from ADP in the presence of a proton or sodium gradient. F-type ATPases consist of two structural domains, F(1) containing the extramembraneous catalytic core and F(0) containing the membrane proton channel, linked together by a central stalk and a peripheral stalk. During catalysis, ATP synthesis in the catalytic domain of F(1) is coupled via a rotary mechanism of the central stalk subunits to proton translocation. Its function is as follows. This protein is part of the stalk that links CF(0) to CF(1). It either transmits conformational changes from CF(0) to CF(1) or is implicated in proton conduction. This chain is ATP synthase subunit delta, found in Natranaerobius thermophilus (strain ATCC BAA-1301 / DSM 18059 / JW/NM-WN-LF).